A 555-amino-acid chain; its full sequence is WRKY transcription factor WRKY24 (555 aa).

Disordered regions lie at residues 133 to 183 (TAPA…AGAN) and 197 to 248 (SEMA…CTFP). Positions 163 to 183 (QQQQQPWGYQQQPAGMDAGAN) are enriched in low complexity. A DNA-binding region (WRKY 1) is located at residues 214–278 (SQRRSSDDGY…YKGTHNHAKP (65 aa)). Residues 253-259 (KKKVERS) carry the Nuclear localization signal motif. Residues 270 to 365 (KGTHNHAKPQ…DGEGISMAGN (96 aa)) form a disordered region. Composition is skewed to polar residues over residues 277–294 (KPQN…QVLQ) and 310–320 (TAATPENSSAS). The segment covering 347-356 (DSKRWRKDGD) has biased composition (basic and acidic residues). A DNA-binding region (WRKY 2) is located at residues 379–444 (SDIDILDDGY…YEGKHNHDVP (66 aa)). A transcription repression of gibberellic acid (GA)-induced promoters region spans residues 466–555 (HPYLPNQPPP…DDMFFQNSLY (90 aa)). The segment at 514–555 (FDDARGSYMSQHQQQQRQNDAMHASRAKEEPGDDMFFQNSLY) is disordered.

It belongs to the WRKY group II-a family. As to expression, expressed in aleurone cells. Mostly expressed in aleurone layers and leaves, and, to a lower extent, in roots, panicles and embryos.

It is found in the nucleus. Functionally, transcription activator. Interacts specifically with the W box (5'-(T)TGAC[CT]-3'), a frequently occurring elicitor-responsive cis-acting element. Negative regulator of both gibberellic acid (GA) and abscisic acid (ABA) signaling in aleurone cells, probably by interfering with GAM1, via the specific repression of GA- and ABA-induced promoters. The polypeptide is WRKY transcription factor WRKY24 (Oryza sativa subsp. japonica (Rice)).